The following is a 291-amino-acid chain: MSIKNIFSKKKKYASVPSEQASQDVPEGIMTKCPQCKKIMLTKELDKNLRVCMNCGRHLQMNAKQRIDSLVDEGTFEEFNGHLISENPLGFPGYEEKLEKDREKTSLNEAIVTGQGEIEGKRAVIAVMDATFRMGSMGSVVGEKITLAIEKAKADKVPFIIFTASGGARMQEGILSLMQMAKTSSALKLFSEDQGLIISVMTNPTTGGVSASFASLGDYNFAEPGALIGFAGRRIIEQTIREDLPEDFQTAEFLLKHGQLDAVIHRAEMKETLGRILALHSTGGEREWLEN.

Residues 29-291 form the CoA carboxyltransferase N-terminal domain; it reads IMTKCPQCKK…TGGEREWLEN (263 aa). Residues C33, C36, C52, and C55 each contribute to the Zn(2+) site. The C4-type zinc-finger motif lies at 33–55; that stretch reads CPQCKKIMLTKELDKNLRVCMNC.

The protein belongs to the AccD/PCCB family. In terms of assembly, acetyl-CoA carboxylase is a heterohexamer composed of biotin carboxyl carrier protein (AccB), biotin carboxylase (AccC) and two subunits each of ACCase subunit alpha (AccA) and ACCase subunit beta (AccD). It depends on Zn(2+) as a cofactor.

It localises to the cytoplasm. The catalysed reaction is N(6)-carboxybiotinyl-L-lysyl-[protein] + acetyl-CoA = N(6)-biotinyl-L-lysyl-[protein] + malonyl-CoA. It participates in lipid metabolism; malonyl-CoA biosynthesis; malonyl-CoA from acetyl-CoA: step 1/1. Its function is as follows. Component of the acetyl coenzyme A carboxylase (ACC) complex. Biotin carboxylase (BC) catalyzes the carboxylation of biotin on its carrier protein (BCCP) and then the CO(2) group is transferred by the transcarboxylase to acetyl-CoA to form malonyl-CoA. The chain is Acetyl-coenzyme A carboxylase carboxyl transferase subunit beta from Bacillus pumilus (strain SAFR-032).